The following is a 331-amino-acid chain: 2-isopropylmalate synthase (331 aa).

In terms of domain architecture, Pyruvate carboxyltransferase spans 1 to 80 (RDEVVRGRDV…YTRINTREIY (80 aa)). 3 residues coordinate Mn(2+): His15, His17, and Asn51. The interval 205–331 (QLEHVQFFSG…PSIEEVHRGV (127 aa)) is regulatory domain.

This sequence belongs to the alpha-IPM synthase/homocitrate synthase family. LeuA type 1 subfamily. Homotetramer. The cofactor is Mn(2+).

The protein resides in the cytoplasm. The enzyme catalyses 3-methyl-2-oxobutanoate + acetyl-CoA + H2O = (2S)-2-isopropylmalate + CoA + H(+). Its pathway is amino-acid biosynthesis; L-leucine biosynthesis; L-leucine from 3-methyl-2-oxobutanoate: step 1/4. Catalyzes the condensation of the acetyl group of acetyl-CoA with 3-methyl-2-oxobutanoate (2-oxoisovalerate) to form 3-carboxy-3-hydroxy-4-methylpentanoate (2-isopropylmalate). The chain is 2-isopropylmalate synthase from Thermus thermophilus.